The sequence spans 356 residues: Thrombopoietin (356 aa).

The N-terminal stretch at 1–21 (MELTDLLLAAMLLAVARLTLS) is a signal peptide. Disulfide bonds link C28–C172 and C50–C106. Residues N197, N206, N235, N249, N256, N336, and N351 are each glycosylated (N-linked (GlcNAc...) asparagine). The tract at residues 291-356 (GGLPPSPSLA…PHPRNLSQET (66 aa)) is disordered. The segment covering 330 to 339 (PSTTMPNSTA) has biased composition (polar residues).

Belongs to the EPO/TPO family. As to expression, found mainly in the liver, kidney and skeletal muscle.

It is found in the secreted. Lineage-specific cytokine affecting the proliferation and maturation of megakaryocytes from their committed progenitor cells. It acts at a late stage of megakaryocyte development. It may be the major physiological regulator of circulating platelets. The protein is Thrombopoietin (Thpo) of Mus musculus (Mouse).